The sequence spans 237 residues: Ribonuclease PH (237 aa).

Phosphate-binding positions include arginine 86 and 124–126; that span reads GTR.

The protein belongs to the RNase PH family. Homohexameric ring arranged as a trimer of dimers.

It catalyses the reaction tRNA(n+1) + phosphate = tRNA(n) + a ribonucleoside 5'-diphosphate. Its function is as follows. Phosphorolytic 3'-5' exoribonuclease that plays an important role in tRNA 3'-end maturation. Removes nucleotide residues following the 3'-CCA terminus of tRNAs; can also add nucleotides to the ends of RNA molecules by using nucleoside diphosphates as substrates, but this may not be physiologically important. Probably plays a role in initiation of 16S rRNA degradation (leading to ribosome degradation) during starvation. This chain is Ribonuclease PH, found in Myxococcus xanthus (strain DK1622).